The following is a 348-amino-acid chain: Centromere protein N (348 aa).

It belongs to the CENP-N/CHL4 family.

Its subcellular location is the nucleus. The protein resides in the chromosome. The protein localises to the centromere. Its function is as follows. Probable component of a centromeric complex involved in assembly of kinetochore proteins, mitotic progression and chromosome segregation. This is Centromere protein N (cenpn) from Xenopus tropicalis (Western clawed frog).